The following is a 436-amino-acid chain: Acetyl-CoA decarbonylase/synthase complex subunit delta 2 (436 aa).

The protein belongs to the CdhD family. In terms of assembly, heterodimer of delta and gamma chains. The ACDS complex is made up of alpha, epsilon, beta, gamma and delta chains with a probable stoichiometry of (alpha(2)epsilon(2))(4)-beta(8)-(gamma(1)delta(1))(8) (Potential).

It functions in the pathway one-carbon metabolism; methanogenesis from acetate. Its function is as follows. Part of a complex that catalyzes the reversible cleavage of acetyl-CoA, allowing growth on acetate as sole source of carbon and energy. Probably maintains the overall quaternary structure of the ACDS complex. This chain is Acetyl-CoA decarbonylase/synthase complex subunit delta 2 (cdhD2), found in Methanosarcina acetivorans (strain ATCC 35395 / DSM 2834 / JCM 12185 / C2A).